A 612-amino-acid chain; its full sequence is Cyclin-dependent kinase G1 (612 aa).

Residues serine 26–asparagine 54 are compositionally biased toward basic and acidic residues. Disordered stretches follow at residues serine 26 to serine 60 and cysteine 239 to aspartate 278. The Protein kinase domain occupies phenylalanine 297–phenylalanine 593. Residues isoleucine 303–valine 311 and lysine 326 contribute to the ATP site. Tyrosine 308 carries the post-translational modification Phosphotyrosine. Aspartate 426 functions as the Proton acceptor in the catalytic mechanism. Position 453 is a phosphoserine (serine 453). Threonine 459 carries the post-translational modification Phosphothreonine.

The protein belongs to the protein kinase superfamily. Ser/Thr protein kinase family. In terms of assembly, forms a complex with CYCL1-1. Associated with the spliceosome. Interacts with RS2Z33. Expressed in leaves and inflorescences. Lower levels of expression in roots and stems.

The protein resides in the nucleus speckle. The enzyme catalyses L-seryl-[protein] + ATP = O-phospho-L-seryl-[protein] + ADP + H(+). The catalysed reaction is L-threonyl-[protein] + ATP = O-phospho-L-threonyl-[protein] + ADP + H(+). In terms of biological role, cyclin-dependent kinase involved in pre-mRNA splicing. Required for the correct splicing of the sixth intron of CALS5 pre-mRNA. May stabilize the binding of U1 snRNP to this rare type of intron with a GC 5'SS. Involved in chromosome pairing and is required for the completion of synapsis in male meiocytes at high ambient temperatures. The chain is Cyclin-dependent kinase G1 (CDKG1) from Arabidopsis thaliana (Mouse-ear cress).